A 664-amino-acid chain; its full sequence is DNA ligase (664 aa).

NAD(+) is bound by residues 32–36 (DKEYD) and 80–81 (SL). Lysine 122 functions as the N6-AMP-lysine intermediate in the catalytic mechanism. NAD(+) contacts are provided by arginine 144, glutamate 178, and lysine 314. The Zn(2+) site is built by cysteine 407, cysteine 410, cysteine 423, and cysteine 429. The BRCT domain maps to 587 to 664 (IDENPFMDKT…NEEEFSNKIK (78 aa)).

This sequence belongs to the NAD-dependent DNA ligase family. LigA subfamily. Mg(2+) is required as a cofactor. It depends on Mn(2+) as a cofactor.

It catalyses the reaction NAD(+) + (deoxyribonucleotide)n-3'-hydroxyl + 5'-phospho-(deoxyribonucleotide)m = (deoxyribonucleotide)n+m + AMP + beta-nicotinamide D-nucleotide.. DNA ligase that catalyzes the formation of phosphodiester linkages between 5'-phosphoryl and 3'-hydroxyl groups in double-stranded DNA using NAD as a coenzyme and as the energy source for the reaction. It is essential for DNA replication and repair of damaged DNA. In Clostridium botulinum (strain Okra / Type B1), this protein is DNA ligase.